The primary structure comprises 111 residues: MRALILLSLGLLRVAVPSPPQVVVYTYKPVVHGEKNTLLCHAKEFNPPNVELQLFEDGNVFSQANQTDLSFESNWKFKLTKFIELIPREDVEYSCHVMYMGKTSIYKLESF.

The N-terminal stretch at 1–17 (MRALILLSLGLLRVAVP) is a signal peptide. Positions 20–111 (PQVVVYTYKP…KTSIYKLESF (92 aa)) constitute an Ig-like C1-type domain.

The protein belongs to the beta-2-microglobulin family. As to quaternary structure, heterodimer of an alpha chain and a beta chain. Beta-2-microglobulin is the beta-chain of major histocompatibility complex class I molecules.

The protein localises to the secreted. Functionally, component of the class I major histocompatibility complex (MHC). Involved in the presentation of peptide antigens to the immune system. The polypeptide is Beta-2-microglobulin (b2m) (Rostroraja eglanteria (Clearnose skate)).